The chain runs to 323 residues: Tumor-associated calcium signal transducer 2 (323 aa).

Residues 1–26 (MARGPGLAPPPLRLPLLLLVLAAVTG) form the signal peptide. The Extracellular segment spans residues 27–274 (HTAAQDNCTC…PPKFSMKRLT (248 aa)). N-linked (GlcNAc...) asparagine glycosylation is present at Asn33. The 76-residue stretch at 70–145 (TSKCLLLKAR…TDKGDLSLRC (76 aa)) folds into the Thyroglobulin type-1 domain. 3 cysteine pairs are disulfide-bonded: Cys73/Cys108, Cys119/Cys125, and Cys127/Cys145. Asn120 is a glycosylation site (N-linked (GlcNAc...) asparagine). Residues Asn168 and Asn208 are each glycosylated (N-linked (GlcNAc...) asparagine). Residues 275–297 (AGLIAVIVVVVVALVAGMAVLVI) form a helical membrane-spanning segment. The Cytoplasmic portion of the chain corresponds to 298–323 (TNRRKSGKYKKVEIKELGELRKEPSL).

It belongs to the EPCAM family. Post-translationally, the N-terminus is blocked. As to expression, placenta, pancreatic carcinoma cell lines.

Its subcellular location is the membrane. Its function is as follows. May function as a growth factor receptor. The protein is Tumor-associated calcium signal transducer 2 (TACSTD2) of Homo sapiens (Human).